Consider the following 499-residue polypeptide: NADH-ubiquinone oxidoreductase chain 2 (499 aa).

Transmembrane regions (helical) follow at residues 15–35 (LFLAVFPEIFIINATFILLIH), 56–76 (WLGLLSVLITLLLLAAGAPLL), 95–115 (FCQIFLLLSTAGTISMCFDFF), 122–142 (AFEFIVLILLSTCGMLFMISA), 145–165 (LIAMYLAIELQSLCFYVIAAS), 179–199 (YLILGAFSSGILLFPCSMIYG), 226–246 (IFMGILFIAVGFLFKITAVPF), 263–283 (AFLSIAPKISIFANILRVFIY), 293–313 (IFFFCSIASMILGALAAMAQT), 319–339 (LAYSSIGHVGYICIGFSCGTI), 345–365 (LLIGIFIYALMTMDAFAIVLA), 386–406 (ILAITFSITMFSYAGIPPLAG), 411–431 (FYLFFAALGCGAYFLALVGVV), and 467–487 (LLLAMTSFFITLFLLYPSPLF).

Complex I is composed of at least 49 different subunits.

It localises to the mitochondrion inner membrane. The catalysed reaction is a ubiquinone + NADH + 5 H(+)(in) = a ubiquinol + NAD(+) + 4 H(+)(out). Its function is as follows. Core subunit of the mitochondrial membrane respiratory chain NADH dehydrogenase (Complex I) that is believed to belong to the minimal assembly required for catalysis. Complex I functions in the transfer of electrons from NADH to the respiratory chain. The immediate electron acceptor for the enzyme is believed to be ubiquinone. The sequence is that of NADH-ubiquinone oxidoreductase chain 2 (ND2) from Arabidopsis thaliana (Mouse-ear cress).